We begin with the raw amino-acid sequence, 263 residues long: HTH-type transcriptional repressor NanR (263 aa).

The interval 1–22 (MGLMNAFDSQTEDSSPAIGRNL) is disordered. In terms of domain architecture, HTH gntR-type spans 30-98 (KKLSEMVEEE…NGERARVSRP (69 aa)). The segment at residues 58-77 (ERELMAFFNVGRPSVREALA) is a DNA-binding region (H-T-H motif).

The protein belongs to the NanR family.

Transcriptional repressor that controls expression of the genes required for the catabolism of sialic acids. The protein is HTH-type transcriptional repressor NanR of Escherichia coli (strain 55989 / EAEC).